The sequence spans 250 residues: Pyrroloquinoline-quinone synthase (250 aa).

Belongs to the PqqC family.

The enzyme catalyses 6-(2-amino-2-carboxyethyl)-7,8-dioxo-1,2,3,4,7,8-hexahydroquinoline-2,4-dicarboxylate + 3 O2 = pyrroloquinoline quinone + 2 H2O2 + 2 H2O + H(+). It participates in cofactor biosynthesis; pyrroloquinoline quinone biosynthesis. In terms of biological role, ring cyclization and eight-electron oxidation of 3a-(2-amino-2-carboxyethyl)-4,5-dioxo-4,5,6,7,8,9-hexahydroquinoline-7,9-dicarboxylic-acid to PQQ. The protein is Pyrroloquinoline-quinone synthase of Xanthomonas oryzae pv. oryzae (strain KACC10331 / KXO85).